A 203-amino-acid polypeptide reads, in one-letter code: FMN-dependent NADH:quinone oxidoreductase (203 aa).

Residues Ser9, 15–17 (SVS), and 138–141 (SRGG) contribute to the FMN site.

This sequence belongs to the azoreductase type 1 family. In terms of assembly, homodimer. The cofactor is FMN.

The catalysed reaction is 2 a quinone + NADH + H(+) = 2 a 1,4-benzosemiquinone + NAD(+). The enzyme catalyses N,N-dimethyl-1,4-phenylenediamine + anthranilate + 2 NAD(+) = 2-(4-dimethylaminophenyl)diazenylbenzoate + 2 NADH + 2 H(+). Its function is as follows. Quinone reductase that provides resistance to thiol-specific stress caused by electrophilic quinones. In terms of biological role, also exhibits azoreductase activity. Catalyzes the reductive cleavage of the azo bond in aromatic azo compounds to the corresponding amines. This Methylorubrum extorquens (strain PA1) (Methylobacterium extorquens) protein is FMN-dependent NADH:quinone oxidoreductase.